A 140-amino-acid chain; its full sequence is Mialostatin (140 aa).

The N-terminal stretch at 1-18 (MAFFKSAVFLVCVVLAAA) is a signal peptide. Intrachain disulfides connect Cys90–Cys103 and Cys114–Cys134.

The protein belongs to the cystatin family. As to expression, expressed in midgut (at protein level).

The protein localises to the secreted. Inhibitor of cysteine proteinases. Inhibits several endogenous midgut digestive cysteine proteases, such as cathepsin L1, L3, B and C, but not aspartic protease cathepsin D1 and cysteine protease legumain. Inhibits proteolysis of blood proteins catalyzed by tick gut cysteine cathepsins. Inhibits host cathepsin B (CSTB), C (CTSC), H (CTSH), K (CTSK), L (CTSL) and S (CTSS). This is Mialostatin from Ixodes ricinus (Common tick).